The following is a 224-amino-acid chain: Ribose-5-phosphate isomerase A 1 (224 aa).

Residues 29 to 32 (SGST), 85 to 88 (DGAD), and 98 to 101 (KGGG) contribute to the substrate site. Glutamate 107 acts as the Proton acceptor in catalysis. Residue lysine 125 participates in substrate binding.

This sequence belongs to the ribose 5-phosphate isomerase family. In terms of assembly, homodimer.

It carries out the reaction aldehydo-D-ribose 5-phosphate = D-ribulose 5-phosphate. Its pathway is carbohydrate degradation; pentose phosphate pathway; D-ribose 5-phosphate from D-ribulose 5-phosphate (non-oxidative stage): step 1/1. In terms of biological role, catalyzes the reversible conversion of ribose-5-phosphate to ribulose 5-phosphate. The polypeptide is Ribose-5-phosphate isomerase A 1 (Oceanobacillus iheyensis (strain DSM 14371 / CIP 107618 / JCM 11309 / KCTC 3954 / HTE831)).